Consider the following 375-residue polypeptide: Anhydro-N-acetylmuramic acid kinase (375 aa).

An ATP-binding site is contributed by 12–19 (GTSMDGVD).

The protein belongs to the anhydro-N-acetylmuramic acid kinase family.

It carries out the reaction 1,6-anhydro-N-acetyl-beta-muramate + ATP + H2O = N-acetyl-D-muramate 6-phosphate + ADP + H(+). It functions in the pathway amino-sugar metabolism; 1,6-anhydro-N-acetylmuramate degradation. Its pathway is cell wall biogenesis; peptidoglycan recycling. Its function is as follows. Catalyzes the specific phosphorylation of 1,6-anhydro-N-acetylmuramic acid (anhMurNAc) with the simultaneous cleavage of the 1,6-anhydro ring, generating MurNAc-6-P. Is required for the utilization of anhMurNAc either imported from the medium or derived from its own cell wall murein, and thus plays a role in cell wall recycling. The polypeptide is Anhydro-N-acetylmuramic acid kinase (Photobacterium profundum (strain SS9)).